A 198-amino-acid chain; its full sequence is Pyridoxal 5'-phosphate synthase subunit PdxT (198 aa).

Residue 52–54 coordinates L-glutamine; the sequence is GES. C84 (nucleophile) is an active-site residue. L-glutamine-binding positions include R115 and 142–143; that span reads IR. Catalysis depends on charge relay system residues H178 and E180.

Belongs to the glutaminase PdxT/SNO family. As to quaternary structure, in the presence of PdxS, forms a dodecamer of heterodimers. Only shows activity in the heterodimer.

It carries out the reaction aldehydo-D-ribose 5-phosphate + D-glyceraldehyde 3-phosphate + L-glutamine = pyridoxal 5'-phosphate + L-glutamate + phosphate + 3 H2O + H(+). The catalysed reaction is L-glutamine + H2O = L-glutamate + NH4(+). It functions in the pathway cofactor biosynthesis; pyridoxal 5'-phosphate biosynthesis. In terms of biological role, catalyzes the hydrolysis of glutamine to glutamate and ammonia as part of the biosynthesis of pyridoxal 5'-phosphate. The resulting ammonia molecule is channeled to the active site of PdxS. The polypeptide is Pyridoxal 5'-phosphate synthase subunit PdxT (Archaeoglobus fulgidus (strain ATCC 49558 / DSM 4304 / JCM 9628 / NBRC 100126 / VC-16)).